A 277-amino-acid chain; its full sequence is Hemin import ATP-binding protein HmuV (277 aa).

The region spanning 25–260 (IHAQGLNLIL…DIIERVYGWP (236 aa)) is the ABC transporter domain. Position 57–64 (57–64 (GPNGAGKS)) interacts with ATP.

The protein belongs to the ABC transporter superfamily. Heme (hemin) importer (TC 3.A.1.14.5) family. As to quaternary structure, the complex is composed of two ATP-binding proteins (HmuV), two transmembrane proteins (HmuU) and a solute-binding protein (HmuT).

The protein resides in the cell inner membrane. Its function is as follows. Part of the ABC transporter complex HmuTUV involved in hemin import. Responsible for energy coupling to the transport system. The protein is Hemin import ATP-binding protein HmuV of Photobacterium profundum (strain SS9).